The sequence spans 118 residues: Protein YLR162W (118 aa).

A compositionally biased stretch (polar residues) spans 1–20 (MQHTLTRTASLPERSSSAHS). A disordered region spans residues 1-26 (MQHTLTRTASLPERSSSAHSAATALP). A helical membrane pass occupies residues 38-58 (LVPLLCIFWFVFVSMSPLPPA).

It localises to the membrane. Overexpression confers resistance to the antimicrobial peptide MiAMP1. This Saccharomyces cerevisiae (strain ATCC 204508 / S288c) (Baker's yeast) protein is Protein YLR162W.